A 298-amino-acid polypeptide reads, in one-letter code: ADP/ATP translocase 1 (298 aa).

Residues 1 to 7 lie on the Mitochondrial intermembrane side of the membrane; that stretch reads MGDHAWS. N-acetylglycine is present on G2. The Solcar 1 repeat unit spans residues 6–98; the sequence is WSFLKDFLAG…FAFKDKYKQL (93 aa). S7 is subject to Phosphoserine. A helical transmembrane segment spans residues 8-37; the sequence is FLKDFLAGGVAAAVSKTAVAPIERVKLLLQ. Topologically, residues 38–74 are mitochondrial matrix; that stretch reads VQHASKQISAEKQYKGIIDCVVRIPKEQGFLSFWRGN. The residue at position 52 (K52) is an N6,N6,N6-trimethyllysine. The helical transmembrane segment at 75–99 threads the bilayer; sequence LANVIRYFPTQALNFAFKDKYKQLF. ADP-binding residues include R80 and K92. Residues 100–109 lie on the Mitochondrial intermembrane side of the membrane; sequence LGGVDRHKQF. Residues 110–130 traverse the membrane as a helical segment; sequence WRYFAGNLASGGAAGATSLCF. 2 Solcar repeats span residues 111 to 201 and 212 to 297; these read RYFA…AKGM and VSWM…IKKY. Residues 131 to 178 lie on the Mitochondrial matrix side of the membrane; that stretch reads VYPLDFARTRLAADVGKGAAQREFHGLGDCIIKIFKSDGLRGLYQGFN. K147 is modified (N6-succinyllysine). At C160 the chain carries S-nitrosocysteine. The chain crosses the membrane as a helical span at residues 179–199; sequence VSVQGIIIYRAAYFGVYDTAK. Residues 200-210 lie on the Mitochondrial intermembrane side of the membrane; it reads GMLPDPKNVHI. A helical transmembrane segment spans residues 211-231; sequence FVSWMIAQSVTAVAGLVSYPF. The Mitochondrial matrix portion of the chain corresponds to 232–273; sequence DTVRRRMMMQSGRKGADIMYTGTVDCWRKIAKDEGAKAFFKG. Residue R235 coordinates ADP. An important for transport activity region spans residues 235 to 240; that stretch reads RRRMMM. Positions 235–240 match the Nucleotide carrier signature motif motif; the sequence is RRRMMM. 2 positions are modified to N6-succinyllysine: K245 and K272. The helical transmembrane segment at 274–291 threads the bilayer; that stretch reads AWSNVLRGMGGAFVLVLY. At 292–298 the chain is on the mitochondrial intermembrane side; the sequence is DEIKKYV.

Belongs to the mitochondrial carrier (TC 2.A.29) family. As to quaternary structure, monomer. Found in a complex with ARL2, ARL2BP and SLC25A4/ANT1. Interacts with ARL2BP. Interacts with ARHGAP11B, thereby inhibiting the mitochondrial permeability transition pore (mPTP). Interacts with TIMM44; leading to inhibit the presequence translocase TIMM23, thereby promoting stabilization of PINK1. In terms of assembly, (Microbial infection) Interacts with HIV-1 Vpr. Post-translationally, under cell death induction, transglutaminated by TGM2. Transglutamination leads to formation of covalent cross-links between a glutamine and the epsilon-amino group of a lysine residue, forming polymers. As to expression, expressed in erythrocytes (at protein level).

The protein resides in the mitochondrion inner membrane. The protein localises to the membrane. The catalysed reaction is ADP(in) + ATP(out) = ADP(out) + ATP(in). It catalyses the reaction H(+)(in) = H(+)(out). With respect to regulation, the matrix-open state (m-state) is inhibited by the membrane-permeable bongkrekic acid (BKA). The cytoplasmic-open state (c-state) is inhibited by the membrane-impermeable toxic inhibitor carboxyatractyloside (CATR). Proton transporter activity is inhibited by ADP:ATP antiporter activity. Its function is as follows. ADP:ATP antiporter that mediates import of ADP into the mitochondrial matrix for ATP synthesis, and export of ATP out to fuel the cell. Cycles between the cytoplasmic-open state (c-state) and the matrix-open state (m-state): operates by the alternating access mechanism with a single substrate-binding site intermittently exposed to either the cytosolic (c-state) or matrix (m-state) side of the inner mitochondrial membrane. In addition to its ADP:ATP antiporter activity, also involved in mitochondrial uncoupling and mitochondrial permeability transition pore (mPTP) activity. Plays a role in mitochondrial uncoupling by acting as a proton transporter: proton transport uncouples the proton flows via the electron transport chain and ATP synthase to reduce the efficiency of ATP production and cause mitochondrial thermogenesis. Proton transporter activity is inhibited by ADP:ATP antiporter activity, suggesting that SLC25A4/ANT1 acts as a master regulator of mitochondrial energy output by maintaining a delicate balance between ATP production (ADP:ATP antiporter activity) and thermogenesis (proton transporter activity). Proton transporter activity requires free fatty acids as cofactor, but does not transport it. Also plays a key role in mPTP opening, a non-specific pore that enables free passage of the mitochondrial membranes to solutes of up to 1.5 kDa, and which contributes to cell death. It is however unclear if SLC25A4/ANT1 constitutes a pore-forming component of mPTP or regulates it. Acts as a regulator of mitophagy independently of ADP:ATP antiporter activity: promotes mitophagy via interaction with TIMM44, leading to inhibit the presequence translocase TIMM23, thereby promoting stabilization of PINK1. This chain is ADP/ATP translocase 1, found in Homo sapiens (Human).